Consider the following 313-residue polypeptide: UPF0761 membrane protein VS_0126 (313 aa).

Transmembrane regions (helical) follow at residues 41-61 (YLAYITLLSIVPMLTVLLSIL), 104-124 (MTAVGSVFLFIAALMLISNID), 139-159 (AVLSFSMYWMVLTLGPILIGA), 185-205 (VIRKLPLITSFFAFFGLYLLV), 217-237 (AGSLVAALLFELSKKGFAAYI), and 249-269 (ALAAIPILFVWVYLCWLIVLV). Positions 281–290 (EQWSDSQEMV) are enriched in polar residues. A disordered region spans residues 281–313 (EQWSDSQEMVHSSDKDKITEQGNNSDSTDPESK).

Belongs to the UPF0761 family.

It localises to the cell inner membrane. The protein is UPF0761 membrane protein VS_0126 of Vibrio atlanticus (strain LGP32) (Vibrio splendidus (strain Mel32)).